The sequence spans 289 residues: Formamidopyrimidine-DNA glycosylase (289 aa).

The Schiff-base intermediate with DNA role is filled by Pro-2. Glu-3 (proton donor) is an active-site residue. The active-site Proton donor; for beta-elimination activity is the Lys-61. DNA-binding residues include His-96, Arg-115, and Lys-161. The FPG-type zinc finger occupies 247 to 281; that stretch reads SAYGQEDRPCPRCGTAIRREKFMNRSSFSCPKCQR. Arg-271 functions as the Proton donor; for delta-elimination activity in the catalytic mechanism.

Belongs to the FPG family. Monomer. Requires Zn(2+) as cofactor.

It catalyses the reaction Hydrolysis of DNA containing ring-opened 7-methylguanine residues, releasing 2,6-diamino-4-hydroxy-5-(N-methyl)formamidopyrimidine.. It carries out the reaction 2'-deoxyribonucleotide-(2'-deoxyribose 5'-phosphate)-2'-deoxyribonucleotide-DNA = a 3'-end 2'-deoxyribonucleotide-(2,3-dehydro-2,3-deoxyribose 5'-phosphate)-DNA + a 5'-end 5'-phospho-2'-deoxyribonucleoside-DNA + H(+). Functionally, involved in base excision repair of DNA damaged by oxidation or by mutagenic agents. Acts as a DNA glycosylase that recognizes and removes damaged bases. Has a preference for oxidized purines, such as 7,8-dihydro-8-oxoguanine (8-oxoG). Has AP (apurinic/apyrimidinic) lyase activity and introduces nicks in the DNA strand. Cleaves the DNA backbone by beta-delta elimination to generate a single-strand break at the site of the removed base with both 3'- and 5'-phosphates. In Rhodococcus opacus (strain B4), this protein is Formamidopyrimidine-DNA glycosylase.